The sequence spans 226 residues: Uridylate kinase (226 aa).

An ATP-binding site is contributed by 6-10 (KISGK). Residue G43 participates in UMP binding. Positions 44 and 48 each coordinate ATP. Residues D65 and 113-119 (FQPGQST) contribute to the UMP site. ATP contacts are provided by T139, N140, Y145, and D148.

This sequence belongs to the UMP kinase family. As to quaternary structure, homohexamer.

Its subcellular location is the cytoplasm. It carries out the reaction UMP + ATP = UDP + ADP. Its pathway is pyrimidine metabolism; CTP biosynthesis via de novo pathway; UDP from UMP (UMPK route): step 1/1. Its activity is regulated as follows. Inhibited by UTP. Catalyzes the reversible phosphorylation of UMP to UDP. This is Uridylate kinase from Sulfurisphaera tokodaii (strain DSM 16993 / JCM 10545 / NBRC 100140 / 7) (Sulfolobus tokodaii).